The following is a 360-amino-acid chain: Protein Wnt-2 (360 aa).

The signal sequence occupies residues 1 to 26; the sequence is MNSSSLFGIWLSVPLILSWVTPQVSS. Intrachain disulfides connect Cys-76–Cys-87, Cys-127–Cys-135, Cys-137–Cys-157, Cys-206–Cys-220, Cys-208–Cys-215, Cys-278–Cys-309, Cys-294–Cys-304, Cys-308–Cys-348, Cys-324–Cys-339, Cys-326–Cys-336, and Cys-331–Cys-332. The O-palmitoleoyl serine; by PORCN moiety is linked to residue Ser-212. Asn-295 carries an N-linked (GlcNAc...) asparagine glycan.

Belongs to the Wnt family. Palmitoleoylation is required for efficient binding to frizzled receptors. Depalmitoleoylation leads to Wnt signaling pathway inhibition.

The protein localises to the secreted. It is found in the extracellular space. The protein resides in the extracellular matrix. In terms of biological role, ligand for members of the frizzled family of seven transmembrane receptors. Functions in the canonical Wnt signaling pathway that results in activation of transcription factors of the TCF/LEF family. Functions as a upstream regulator of FGF10 expression. Plays an important role in embryonic lung development. May contribute to embryonic brain development by regulating the proliferation of dopaminergic precursors and neurons. The sequence is that of Protein Wnt-2 (WNT2) from Monodelphis domestica (Gray short-tailed opossum).